A 382-amino-acid chain; its full sequence is MAVLRPVDMRMQPAPYEGRMKVIHKILEQLQKYRPRKANLEGLAVQWEHEVAKRSSSKHGYMFNASLLLRDIARHKGNLNRQGRYEAPAPQVSKAEVLAALRNLVLSEQVLSENGYVTAQDALESAAEEKEGLETCVRCLKKFDVRDIMVPTQCQFHVLKEQYNKDMRTFQYRCCGEIGTSCTPFALGCKTLEHHVFRPCTYAAMSKLLPFRNTRGVEGETNVLALDCEMAYTSCGYELIRLTVVEFWTNAVLFDEIVQPLGEIIDLNTQFSGVHEIDRAVAKTFEEAREVFLSPAMINENSILIGHGLENDLNVLRIIHDKIIDTAILYPNGKFKSSLRNLAFQELSRRIQTGEHDSSEDAIAAMDVVKHKLGIPLDRKTW.

Residues 223 to 369 (VLALDCEMAY…EDAIAAMDVV (147 aa)) form the Exonuclease domain.

The protein belongs to the REXO1/REXO3 family.

It localises to the cytoplasm. The protein localises to the nucleus. Its function is as follows. 3' to 5' exoribonuclease required for proper 3' end maturation of MRP RNA and of the U5L snRNA. The sequence is that of RNA exonuclease 3 (REX3) from Eremothecium gossypii (strain ATCC 10895 / CBS 109.51 / FGSC 9923 / NRRL Y-1056) (Yeast).